The primary structure comprises 1183 residues: DNA-directed RNA polymerase subunit beta (1183 aa).

It belongs to the RNA polymerase beta chain family. In terms of assembly, the RNAP catalytic core consists of 2 alpha, 1 beta, 1 beta' and 1 omega subunit. When a sigma factor is associated with the core the holoenzyme is formed, which can initiate transcription.

The catalysed reaction is RNA(n) + a ribonucleoside 5'-triphosphate = RNA(n+1) + diphosphate. Functionally, DNA-dependent RNA polymerase catalyzes the transcription of DNA into RNA using the four ribonucleoside triphosphates as substrates. This chain is DNA-directed RNA polymerase subunit beta, found in Staphylococcus aureus (strain Mu3 / ATCC 700698).